Here is a 471-residue protein sequence, read N- to C-terminus: Siroheme synthase 1 (471 aa).

Positions 1–203 (MDYLPLFAEL…GNSAEAEKAL (203 aa)) are precorrin-2 dehydrogenase /sirohydrochlorin ferrochelatase. Residues 22–23 (EI) and 43–44 (ET) contribute to the NAD(+) site. Residue Ser128 is modified to Phosphoserine. Residues 215–471 (GEIILVGAGP…GFNASVVNLA (257 aa)) form a uroporphyrinogen-III C-methyltransferase region. An S-adenosyl-L-methionine-binding site is contributed by Pro224. Catalysis depends on Asp247, which acts as the Proton acceptor. The active-site Proton donor is Lys269. S-adenosyl-L-methionine contacts are provided by residues 300-302 (GGD), Ile305, 330-331 (TA), Met382, and Gly411.

In the N-terminal section; belongs to the precorrin-2 dehydrogenase / sirohydrochlorin ferrochelatase family. The protein in the C-terminal section; belongs to the precorrin methyltransferase family.

The catalysed reaction is uroporphyrinogen III + 2 S-adenosyl-L-methionine = precorrin-2 + 2 S-adenosyl-L-homocysteine + H(+). It catalyses the reaction precorrin-2 + NAD(+) = sirohydrochlorin + NADH + 2 H(+). The enzyme catalyses siroheme + 2 H(+) = sirohydrochlorin + Fe(2+). Its pathway is cofactor biosynthesis; adenosylcobalamin biosynthesis; precorrin-2 from uroporphyrinogen III: step 1/1. It functions in the pathway cofactor biosynthesis; adenosylcobalamin biosynthesis; sirohydrochlorin from precorrin-2: step 1/1. The protein operates within porphyrin-containing compound metabolism; siroheme biosynthesis; precorrin-2 from uroporphyrinogen III: step 1/1. It participates in porphyrin-containing compound metabolism; siroheme biosynthesis; siroheme from sirohydrochlorin: step 1/1. Its pathway is porphyrin-containing compound metabolism; siroheme biosynthesis; sirohydrochlorin from precorrin-2: step 1/1. Multifunctional enzyme that catalyzes the SAM-dependent methylations of uroporphyrinogen III at position C-2 and C-7 to form precorrin-2 via precorrin-1. Then it catalyzes the NAD-dependent ring dehydrogenation of precorrin-2 to yield sirohydrochlorin. Finally, it catalyzes the ferrochelation of sirohydrochlorin to yield siroheme. The protein is Siroheme synthase 1 of Klebsiella pneumoniae subsp. pneumoniae (strain ATCC 700721 / MGH 78578).